A 327-amino-acid chain; its full sequence is Zinc transport protein ZntB (327 aa).

Residues 1–273 are Cytoplasmic-facing; the sequence is MEAIKGADVN…ARRTYTMSLM (273 aa). A helical transmembrane segment spans residues 274-294; it reads AMVFLPSTFLTGLFGVNLGGI. Residues 295-300 are Periplasmic-facing; the sequence is PGGGWR. Residues 301 to 321 form a helical membrane-spanning segment; the sequence is FGFSLFCILLVVLIGGVALWL. Over 322 to 327 the chain is Cytoplasmic; the sequence is HRSKWL.

The protein belongs to the CorA metal ion transporter (MIT) (TC 1.A.35) family.

The protein resides in the cell inner membrane. It carries out the reaction Zn(2+)(out) + H(+)(out) = Zn(2+)(in) + H(+)(in). Zinc transporter. Acts as a Zn(2+):proton symporter, which likely mediates zinc ion uptake. The protein is Zinc transport protein ZntB of Escherichia fergusonii (strain ATCC 35469 / DSM 13698 / CCUG 18766 / IAM 14443 / JCM 21226 / LMG 7866 / NBRC 102419 / NCTC 12128 / CDC 0568-73).